The chain runs to 365 residues: Zinc finger MYND domain-containing protein 12 (365 aa).

Residues C17, C20, C28, C31, C37, H41, H50, and C54 each contribute to the Zn(2+) site. The MYND-type; atypical zinc finger occupies 17-54; that stretch reads CEVCEAPAERVCAACTVTYYCGVVHQKADWDSIHEKIC. TPR repeat units follow at residues 172 to 205 and 214 to 247; these read SLLH…ASCA and SGGY…WHAY.

As to expression, expressed predominantly in the testis.

It is found in the cell projection. Its subcellular location is the cilium. It localises to the flagellum. Required for sperm flagellum function and male fertility. The polypeptide is Zinc finger MYND domain-containing protein 12 (ZMYND12) (Homo sapiens (Human)).